A 354-amino-acid chain; its full sequence is Petrobactin import system permease protein FatC (354 aa).

Helical transmembrane passes span 37 to 57, 77 to 97, 116 to 136, 141 to 161, 168 to 188, 214 to 234, 259 to 279, 302 to 322, and 329 to 349; these read YWIV…GLLV, IVAI…TVAF, LYSA…LINF, SFLF…GWLL, LQLM…VSTF, PAYF…IFAH, VIYT…LIGP, YIFP…YFLM, and QGVV…TIVL.

The protein belongs to the binding-protein-dependent transport system permease family. FecCD subfamily. In terms of assembly, the complex is composed of two ATP-binding proteins (FatE), two transmembrane proteins (FatC and FatD) and a solute-binding protein (FpuA).

Its subcellular location is the cell membrane. In terms of biological role, part of an ABC transporter complex involved in ferric-petrobactin uptake. Probably responsible for the translocation of the substrate across the membrane. The sequence is that of Petrobactin import system permease protein FatC from Bacillus anthracis.